The chain runs to 551 residues: Colicin-E6 (551 aa).

5 disordered regions span residues Met1–Gly74, Leu244–Asp269, Pro293–Glu317, Asn406–Asp501, and Glu517–Leu551. The span at Ile20 to Asp35 shows a compositional bias: gly residues. Residues Gly36 to Pro45 are compositionally biased toward low complexity. Gly residues predominate over residues Trp46–Gly74. 2 stretches are compositionally biased toward basic and acidic residues: residues Val296 to Glu317 and Glu430 to Pro484. The tract at residues Lys455–Leu551 is ribosome inactivating activity. The segment at Phe530–Leu551 is binding of immunity protein.

It belongs to the cloacin colicin family.

Functionally, inactivates ribosomes by hydrolyzing 16S RNA in 30S ribosomes at a specific site. Colicins are polypeptide toxins produced by and active against E.coli and closely related bacteria. This chain is Colicin-E6, found in Escherichia coli.